The following is a 337-amino-acid chain: 2-oxoglutarate-dependent ethylene/succinate-forming enzyme (337 aa).

The Fe2OG dioxygenase domain maps to 166–286 (GWHHMRVLRF…RFACAYFHEP (121 aa)). The Fe cation site is built by H189 and H268.

This sequence belongs to the iron/ascorbate-dependent oxidoreductase family. In terms of assembly, monomer. Fe(2+) is required as a cofactor.

It catalyses the reaction 2-oxoglutarate + O2 + 2 H(+) = ethene + 3 CO2 + H2O. It carries out the reaction L-arginine + 2-oxoglutarate + O2 = guanidine + L-glutamate 5-semialdehyde + succinate + CO2. It functions in the pathway alkene biosynthesis; ethylene biosynthesis via 2-oxoglutarate. Its function is as follows. Simultaneously catalyzes two reactions, namely formation of ethylene and of succinate from 2-oxoglutarate. This Pseudomonas syringae pv. pisi protein is 2-oxoglutarate-dependent ethylene/succinate-forming enzyme (efe).